The following is a 335-amino-acid chain: Leukocyte immunoglobulin-like receptor subfamily B member 4A (335 aa).

An N-terminal signal peptide occupies residues M1 to A23. Residues G24–K238 are Extracellular-facing. Ig-like C2-type domains lie at Y42–S125 and P124–N212. C49 and C98 are disulfide-bonded. Residues N133 and N191 are each glycosylated (N-linked (GlcNAc...) asparagine). The cysteines at positions 144 and 196 are disulfide-linked. A helical transmembrane segment spans residues I239 to I260. The Cytoplasmic segment spans residues G261–S335. 2 consecutive short sequence motifs (ITIM motif) follow at residues I298–V303 and V320–L325.

In terms of assembly, interacts (when tyrosine phosphorylated) with SH2 domain-containing phosphatases PTPN6/SHP-1 and PTPN11/SHP-2; interaction with PTPN6 enhances inhibition of mast cell activation. Tyrosine phosphorylated. As to expression, expressed on mast cells and natural killer cells (at protein level). Expressed on neutrophils (at protein level). Expressed on eosinophils (at protein level). Expressed on dendritic cells (at protein level). Expressed on memory and marginal zone B cells (at protein level). Expressed on CD8 T cells (at protein level). Expressed in the uterus of pregnant mice where it is detected at day 4.0 of pregnancy with levels dropping at day 4.5. Highly expressed in the luminal epithelium of uterine endometrium with lower levels in the glandular epithelium.

The protein localises to the cell membrane. Its function is as follows. Inhibitory receptor involved in the down-regulation of the immune response. Receptor for FN1. Receptor for integrin ITGAV/ITGB3. Inhibits IgE-mediated mast cell activation, at least in part through interaction with ITGAV/ITGB3. Also inhibits KITLG/SCF-mediated mast cell activation. Through interaction with ITGAV/ITGB3, inhibits antibody production by memory and marginal zone B cells, probably by suppressing their differentiation into plasma cells. Inhibits IFNG production by CD8 T cells, CD4 T cells and natural killer cells. Inhibits antigen presentation by dendritic cells to T cells, preventing T cell activation. Inhibits lipopolysaccharide-mediated neutrophil-dependent vascular injury. Suppresses the allergic inflammatory response by inhibiting infiltration of neutrophils and eosinophils and preventing mast cell degranulation. Inhibits lysis by natural killer cells. This Mus musculus (Mouse) protein is Leukocyte immunoglobulin-like receptor subfamily B member 4A.